A 1063-amino-acid polypeptide reads, in one-letter code: Alkane uptake protein B (1063 aa).

The first 17 residues, 1–17 (MKYNKTLALIPAILLAA), serve as a signal peptide directing secretion. Cys-18 is lipidated: N-palmitoyl cysteine. Cys-18 carries S-diacylglycerol cysteine lipidation.

In terms of assembly, interacts with the outer membrane protein AupA.

It is found in the cell inner membrane. Its function is as follows. Required for growth on alkanes. Probably involved in the uptake of micelle-solubilized alkanes. May facilitate the transfer of alkanes from the outer membrane to the inner membrane. The protein is Alkane uptake protein B of Marinobacter nauticus (strain ATCC 49840 / DSM 8798 / CIP 103578 / SP17) (Marinobacter hydrocarbonoclasticus).